The chain runs to 333 residues: Probable malate dehydrogenase 3 (333 aa).

12 to 18 (GAAGQIA) lines the NAD(+) pocket. Residues R93 and R99 each coordinate substrate. NAD(+)-binding positions include N106, Q113, and 130-132 (VGN). The substrate site is built by N132 and R163. The active-site Proton acceptor is H188.

It belongs to the LDH/MDH superfamily. MDH type 2 family. As to quaternary structure, homodimer.

It catalyses the reaction (S)-malate + NAD(+) = oxaloacetate + NADH + H(+). In terms of biological role, catalyzes the reversible oxidation of malate to oxaloacetate. The chain is Probable malate dehydrogenase 3 (mdhC) from Dictyostelium discoideum (Social amoeba).